We begin with the raw amino-acid sequence, 449 residues long: Putative cytochrome P450 135A1 (449 aa).

Cysteine 383 contacts heme.

The protein belongs to the cytochrome P450 family. Heme is required as a cofactor.

This chain is Putative cytochrome P450 135A1 (cyp135A1), found in Mycobacterium tuberculosis (strain CDC 1551 / Oshkosh).